The chain runs to 329 residues: Cytosolic Fe-S cluster assembly factor NBP35 (329 aa).

The interval 1 to 33 is disordered; it reads MAPSQVEDISKTELETPEHCPGPESEQAGKEDA. The span at 8–18 shows a compositional bias: basic and acidic residues; that stretch reads DISKTELETPE. 4 residues coordinate [4Fe-4S] cluster: Cys-20, Cys-34, Cys-37, and Cys-43. Residue 74 to 81 coordinates ATP; that stretch reads GKGGVGKS. [4Fe-4S] cluster contacts are provided by Cys-248 and Cys-251.

It belongs to the Mrp/NBP35 ATP-binding proteins family. NUBP1/NBP35 subfamily. As to quaternary structure, heterotetramer of 2 NBP35 and 2 CFD1 chains. Requires [4Fe-4S] cluster as cofactor.

It is found in the cytoplasm. Its subcellular location is the nucleus. Component of the cytosolic iron-sulfur (Fe/S) protein assembly (CIA) machinery. Required for maturation of extramitochondrial Fe-S proteins. The NBP35-CFD1 heterotetramer forms a Fe-S scaffold complex, mediating the de novo assembly of an Fe-S cluster and its transfer to target apoproteins. Required for biogenesis and export of both ribosomal subunits, which may reflect a role in assembly of the Fe/S clusters in RLI1, a protein which performs rRNA processing and ribosome export. The chain is Cytosolic Fe-S cluster assembly factor NBP35 from Debaryomyces hansenii (strain ATCC 36239 / CBS 767 / BCRC 21394 / JCM 1990 / NBRC 0083 / IGC 2968) (Yeast).